The following is a 99-amino-acid chain: Virion membrane protein OPG135 (99 aa).

The signal sequence occupies residues 1–22 (MSCYTAILKSVGGLALFQVANG). Residues 23-45 (AIDLCRHFFMYFCEQKLRPNSFW) are Intravirion-facing. The helical transmembrane segment at 46-66 (FVVVRAIASMIMYLVLGIALL) threads the bilayer. The Virion surface portion of the chain corresponds to 67–83 (YISEQDDKKNTNNDGSN). Positions 73 to 89 (DKKNTNNDGSNNDKRNE) are enriched in basic and acidic residues. The interval 73 to 99 (DKKNTNNDGSNNDKRNESSINSNSSPK) is disordered. N-linked (GlcNAc...) asparagine; by host glycosylation is present at Asn88. The span at 90-99 (SSINSNSSPK) shows a compositional bias: polar residues.

This sequence belongs to the oerthopoxvirus OPG135 family.

The protein resides in the virion membrane. It is found in the host cytoplasm. Envelope protein. Required for an early step in virion morphogenesis. This is Virion membrane protein OPG135 (OPG135) from Homo sapiens (Human).